Here is a 298-residue protein sequence, read N- to C-terminus: Protein DR_1172 (298 aa).

LEA-like repeat units follow at residues 48 to 117 (DAAQ…NVGQ), 128 to 197 (DQAK…DVAQ), and 201 to 270 (QGAQ…AGKQ). A compositionally biased stretch (basic and acidic residues) spans 174–193 (VQDVKADASKAADQAKDKAQ). The disordered stretch occupies residues 174 to 298 (VQDVKADASK…MTGNTNTRKN (125 aa)). Residues 194–208 (DVAQNVKQGAQQAAS) are compositionally biased toward low complexity. Residues 209-233 (DAKDKVQDVKADASRAADQAKDKAQ) show a composition bias toward basic and acidic residues. Over residues 275-298 (GSTTNNAGTAGNTGMTGNTNTRKN) the composition is skewed to low complexity.

It belongs to the LEA type 1 family.

The polypeptide is Protein DR_1172 (Deinococcus radiodurans (strain ATCC 13939 / DSM 20539 / JCM 16871 / CCUG 27074 / LMG 4051 / NBRC 15346 / NCIMB 9279 / VKM B-1422 / R1)).